Here is a 2211-residue protein sequence, read N- to C-terminus: Orsellinic acid synthase (2211 aa).

The interval 44–246 is N-terminal acylcarrier protein transacylase domain (SAT); the sequence is TFREQVSDAI…TVAVVHSLYH (203 aa). One can recognise a Ketosynthase family 3 (KS3) domain in the interval 380–805; that stretch reads WDDIAIVGMA…GSNAAVIIGE (426 aa). Active-site for beta-ketoacyl synthase activity residues include C549, H684, and H724. Residues 910 to 1228 form a malonyl-CoA:ACP transacylase (MAT) domain region; that stretch reads VFIFSGQGSQ…QLTTLKKNVP (319 aa). The active-site For acyl/malonyl transferase activity is S1006. Positions 1309 to 1440 are N-terminal hotdog fold; it reads HAIQKLSHGA…GVVKQSNMAS (132 aa). Residues 1309–1629 form the PKS/mFAS DH domain; that stretch reads HAIQKLSHGA…FQHVKIPLIE (321 aa). Residues 1334-1573 form a product template (PT) domain region; that stretch reads EFIEGHLVCG…GATTLRAPVV (240 aa). H1339 (proton acceptor; for dehydratase activity) is an active-site residue. The C-terminal hotdog fold stretch occupies residues 1473-1629; that stretch reads VQVFSKRAMY…FQHVKIPLIE (157 aa). Residue D1537 is the Proton donor; for dehydratase activity of the active site. Carrier domains follow at residues 1681-1755 and 1787-1865; these read AAPE…EALS and STVD…VKRP. An O-(pantetheine 4'-phosphoryl)serine modification is found at S1715. Residues 1755–1786 are disordered; that stretch reads SPTPVGNDVDNDSPTPGSERGSDSAISTPASV. S1824 bears the O-(pantetheine 4'-phosphoryl)serine mark. Residues 1937–2204 form a thioesterase (TE) domain region; that stretch reads SGKSPLFLIH…AAVSAALVDA (268 aa).

The enzyme catalyses 3 malonyl-CoA + acetyl-CoA + 2 H(+) = orsellinate + 3 CO2 + 4 CoA. It functions in the pathway secondary metabolite biosynthesis. In terms of biological role, non-reducing polyketide synthase; part of the gene cluster that mediates the biosynthesis of the bibenzoquinone oosporein, a metabolite required for fungal virulence that acts by evading host immunity to facilitate fungal multiplication in insects. The non-reducing polyketide synthase OpS1 produces orsellinic acid by condensing acetyl-CoA with 3 malonyl-CoA units. Orsellinic acid is then hydroxylated to benzenetriol by the hydroxylase OpS4. The intermediate is oxidized either nonenzymatically to 5,5'-dideoxy-oosporein or enzymatically to benzenetetrol by the oxidoreductase OpS7. The latter is further dimerized to oosporein by the catalase OpS5. OpS6 probably functions en route for protecting cells against oxidative stress by scavenging any leaked free radical form of benzenetetrol by activating the thiol group of glutathione. This chain is Orsellinic acid synthase, found in Beauveria bassiana (strain ARSEF 2860) (White muscardine disease fungus).